The chain runs to 280 residues: Mitochondrial outer membrane protein porin 2 (280 aa).

This sequence belongs to the eukaryotic mitochondrial porin (TC 1.B.8.1) family. In terms of tissue distribution, expressed in roots, stems, leaves, palea, lemma and pollen.

The protein localises to the mitochondrion outer membrane. In terms of biological role, forms a channel through the mitochondrial outer membrane that allows diffusion of small hydrophilic molecules. The channel adopts an open conformation at low or zero membrane potential and a closed conformation at potentials above 30-40 mV. The open state has a weak anion selectivity whereas the closed state is cation-selective. The protein is Mitochondrial outer membrane protein porin 2 (VDAC2) of Oryza sativa subsp. japonica (Rice).